The sequence spans 443 residues: Xaa-Pro dipeptidase (443 aa).

The Mn(2+) site is built by Asp-246, Asp-257, His-339, Glu-384, and Glu-423.

Belongs to the peptidase M24B family. Bacterial-type prolidase subfamily. Mn(2+) serves as cofactor.

It carries out the reaction Xaa-L-Pro dipeptide + H2O = an L-alpha-amino acid + L-proline. Splits dipeptides with a prolyl residue in the C-terminal position. This Enterobacter sp. (strain 638) protein is Xaa-Pro dipeptidase.